Consider the following 144-residue polypeptide: Protein SprT-like (144 aa).

Residues 4–143 (NKYVQEVSLQ…GKCRGKLTLK (140 aa)) enclose the SprT-like domain. His64 is a binding site for Zn(2+). Residue Glu65 is part of the active site. His68 contributes to the Zn(2+) binding site.

It belongs to the SprT family. Zn(2+) serves as cofactor.

Its subcellular location is the cytoplasm. The protein is Protein SprT-like of Streptococcus suis (strain 98HAH33).